The chain runs to 101 residues: Putative septation protein SpoVG (101 aa).

This sequence belongs to the SpoVG family.

Could be involved in septation. The polypeptide is Putative septation protein SpoVG (Staphylococcus saprophyticus subsp. saprophyticus (strain ATCC 15305 / DSM 20229 / NCIMB 8711 / NCTC 7292 / S-41)).